A 281-amino-acid polypeptide reads, in one-letter code: 40S small subunit processome assembly factor 1 (281 aa).

The interval 29 to 141 (LGETEGETEQ…DEDEPAKNKT (113 aa)) is disordered. A phosphoserine mark is found at serine 67 and serine 75. Lysine 172 is modified (N6-acetyllysine). The segment at 221 to 254 (ETDIFKKKKKKGRGQEDRRSKKSAPSILSSGQVG) is disordered. Serine 267 carries the phosphoserine modification.

As to quaternary structure, part of the small subunit (SSU) processome, composed of more than 70 proteins and the RNA chaperone small nucleolar RNA (snoRNA) U3.

Its subcellular location is the chromosome. The protein resides in the nucleus. The protein localises to the nucleolus. Part of the small subunit (SSU) processome, first precursor of the small eukaryotic ribosomal subunit. During the assembly of the SSU processome in the nucleolus, many ribosome biogenesis factors, an RNA chaperone and ribosomal proteins associate with the nascent pre-rRNA and work in concert to generate RNA folding, modifications, rearrangements and cleavage as well as targeted degradation of pre-ribosomal RNA by the RNA exosome. Prevents helicase DHX37 to be recruited before post-A1 state. This is 40S small subunit processome assembly factor 1 from Mus musculus (Mouse).